Here is a 538-residue protein sequence, read N- to C-terminus: Putative amidase kk1C (538 aa).

Residues M1 to H32 form a disordered region. Active-site charge relay system residues include K134 and S209. S233 (acyl-ester intermediate) is an active-site residue.

It belongs to the amidase family.

It catalyses the reaction a monocarboxylic acid amide + H2O = a monocarboxylate + NH4(+). Its pathway is secondary metabolite biosynthesis. In terms of biological role, putative amidase; part of the gene cluster that mediates the biosynthesis of KK-1, a novel cyclic depsipeptide with 10 residues which is a promising active compound with high activity against many plant pathogens, especially Botrytis cinerea. The role of kk1C in KK-1 biosynthesis has still to be determined. The nonribosomal peptide synthetase (NRPS) kk1B catalyzes the elongation and cyclization of the decapeptide chain composed of 1 D-lactic acid residue (D-Lac), 1 pipecolic acid residue (Pip), 1 aspartic acid residue (Asp), 1 isoleucine residue (Ile), 1 glycine residue (Gly), 1 tyrosine residue (Tyr) and 4 valine residues (Val). The Asp, Ile and 3 Val residues are N-methylated by the 5 methyltransferase domains from the NRPS (found in modules 3, 5, 6, 7 and 9), whereas the Tyr residue is O-methylated by the cluster encoded O-methyltransferase kk1A. The thioesterase kk1J is likely to be involved in the corrective mechanism of peptide chain synthesis. The D-lactate dehydrogenase kk1H is involved in the synthesis of D-lactic acid from pyruvic acid, which is recognized by the A domain of the first kk1B module. The pyrroline-5-carboxylate reductase kk1I is involved in the synthesis of the L-pipecolic acid residue of KK-1 from delta-1-pyrroline-5-carboxylate (P5C), a metabolic intermediate of lysine. It is still unclear how kk1C and kk1D are involved in the production of KK-1. The chain is Putative amidase kk1C from Curvularia clavata.